A 1151-amino-acid polypeptide reads, in one-letter code: Phospholipid-transporting ATPase NEO1 (1151 aa).

Disordered regions lie at residues 1 to 21 (MPNP…NNNQ) and 73 to 95 (LDNF…THPL). Topologically, residues 1-184 (MPNPPSFKSH…LSNAKYNAVT (184 aa)) are extracellular. The segment covering 12–21 (QNLFNSNNNQ) has biased composition (polar residues). The tract at residues 51 to 104 (EPLSKHNTVGDRESFEMRTVDDLDNFSNHSSDSHRKSSNTDTHPLMYDNRLSQD) is required for endosome-to-Golgi sorting. Phosphoserine is present on S102. Residues 185–205 (FVPTLLYEQFKFFYNLYFLVV) form a helical membrane-spanning segment. Residues 206–209 (ALSQ) lie on the Cytoplasmic side of the membrane. A helical membrane pass occupies residues 210–230 (AVPALRIGYLSSYIVPLAFVL). At 231–367 (TVTMAKEAID…TSNPLSVDNT (137 aa)) the chain is on the extracellular side. The chain crosses the membrane as a helical span at residues 368 to 388 (LWANTVLASSGFCIACVVYTG). At 389–416 (RDTRQAMNTTTAKVKTGLLELEINSISK) the chain is on the cytoplasmic side. Residues 417–437 (ILCACVFALSILLVAFAGFHN) traverse the membrane as a helical segment. A topological domain (extracellular) is located at residue D438. A helical membrane pass occupies residues 439 to 459 (DWYIDILRYLILFSTIIPVSL). At 460–947 (RVNLDLAKSV…KLAQFVMHRG (488 aa)) the chain is on the cytoplasmic side. The active-site 4-aspartylphosphate intermediate is D503. ATP contacts are provided by D503, K504, and T505. D503 serves as a coordination point for Mg(2+). T505 serves as a coordination point for Mg(2+). S551 carries the phosphoserine modification. Residues E597, F640, S642, K645, K664, R693, T694, T774, G775, D776, R856, and K862 each coordinate ATP. D882 contributes to the Mg(2+) binding site. ATP is bound by residues N885 and D886. Mg(2+) is bound at residue D886. The helical transmembrane segment at 948-968 (LIIAICQAVYSICSLFEPIAL) threads the bilayer. Over 969-970 (YQ) the chain is Extracellular. Residues 971-991 (GWLMVGYATCYTMAPVFSLTL) traverse the membrane as a helical segment. At 992 to 1020 (DHDIEESLTKIYPELYKELTEGKSLSYKT) the chain is on the cytoplasmic side. The helical transmembrane segment at 1021 to 1041 (FFVWVLLSLFQGSVIQLFSQA) threads the bilayer. The Extracellular segment spans residues 1042–1052 (FTSLLDTDFTR). Residues 1053-1073 (MVAISFTALVVNELIMVALEI) form a helical membrane-spanning segment. Residues 1074–1078 (YTWNK) lie on the Cytoplasmic side of the membrane. Residues 1079-1099 (TMLVTEIATLLFYIVSVPFLG) traverse the membrane as a helical segment. Over 1100–1109 (DYFDLGYMTT) the chain is Extracellular. The helical transmembrane segment at 1110–1130 (VNYYAGLLVILLISIFPVWTA) threads the bilayer. Residues 1131–1151 (KAIYRRLHPPSYAKVQEFATP) are Cytoplasmic-facing. The interval 1131–1151 (KAIYRRLHPPSYAKVQEFATP) is required for endosomal targeting.

It belongs to the cation transport ATPase (P-type) (TC 3.A.3) family. Type IV subfamily. As to quaternary structure, interacts with MON2. Interacts with ANY1. Functions without a CDC50/LEM3 family accessory subunit. The cofactor is Mg(2+).

It is found in the endosome membrane. The protein resides in the golgi apparatus membrane. It carries out the reaction ATP + H2O + phospholipidSide 1 = ADP + phosphate + phospholipidSide 2.. The catalysed reaction is a 1,2-diacyl-sn-glycero-3-phospho-L-serine(out) + ATP + H2O = a 1,2-diacyl-sn-glycero-3-phospho-L-serine(in) + ADP + phosphate + H(+). The enzyme catalyses a 1,2-diacyl-sn-glycero-3-phosphoethanolamine(out) + ATP + H2O = a 1,2-diacyl-sn-glycero-3-phosphoethanolamine(in) + ADP + phosphate + H(+). Flippase that catalyzes the hydrolysis of ATP coupled to the transport of lysophosphatidylserine, phosphatidylethanolamine, and phosphatidylserine from the lumenal to the cytosolic leaflet of the Golgi apparatus membrane and ensures the maintenance of asymmetric distribution of phospholipids. Does not appear to transport phosphatidylcholine or sphingomyelin. May be involved in recycling from endosomes by driving the formation of SNX3-dependent recycling tubules. Required for COPI retrograde transport from the Golgi to the endoplasmic reticulum, Golgi-endosome trafficking, and Golgi-dependent protein glycosylation. This is Phospholipid-transporting ATPase NEO1 from Saccharomyces cerevisiae (strain ATCC 204508 / S288c) (Baker's yeast).